Reading from the N-terminus, the 1644-residue chain is Terminal uridylyltransferase 4 (1644 aa).

Disordered stretches follow at residues 30–60 and 75–277; these read SNQTLKPRNDKSEIGTSSLNRNSSKKTKQND and AASV…EMDY. A Phosphoserine modification is found at Ser-102. Polar residues predominate over residues 108–123; that stretch reads KGSSQTKLEKTPSLQT. Ser-131 bears the Phosphoserine mark. Polar residues-rich tracts occupy residues 146–156 and 163–174; these read AEATTEKALNS and TPTSQMKLQKTP. At Ser-176 the chain carries Phosphoserine. 2 stretches are compositionally biased toward polar residues: residues 194–209 and 226–242; these read QTESQQTGKKLTSSFV and LENSSLSQKQQTQTDNI. Over residues 258-272 the composition is skewed to basic and acidic residues; it reads DLSKMKSEESNKENS. A required for interaction with LIN28A and pre-let-7 RNA region spans residues 273 to 353; sequence SEMDYLENAT…KEKRHKKNIL (81 aa). Zn(2+) contacts are provided by Cys-326, Cys-329, His-342, and His-348. The segment covering 603 to 623 has biased composition (basic and acidic residues); the sequence is IADENKAKADEPKDDTKKTET. The interval 603 to 640 is disordered; sequence IADENKAKADEPKDDTKKTETDNQSNAAKAKHGKSPLT. The 50-residue stretch at 649 to 698 folds into the PAP-associated 1 domain; the sequence is LGQLWLELLKFYTLDFALEEYVICVRIQDILTRENKNWPKRRIAIEDPFS. Disordered stretches follow at residues 733-759 and 812-841; these read KGGNKSTMDPKKKEKGKLSSKKPVKSD and HGQDSSSLSTASGGSDLKQKSAEKQGDLTP. Positions 745-755 are enriched in basic residues; sequence KEKGKLSSKKP. Low complexity predominate over residues 815 to 827; the sequence is DSSSLSTASGGSD. Residues 828–837 are compositionally biased toward basic and acidic residues; it reads LKQKSAEKQG. A sufficient for monouridylation activity region spans residues 918 to 1634; sequence DKFILTSGKP…CATRRCRERC (717 aa). The segment at 930–947 adopts a CCHC-type 1 zinc-finger fold; the sequence is IVCSICKKDGHSKNDCPE. Residues 1015–1018, 1025–1028, Asn-1098, Lys-1120, 1138–1142, and His-1254 contribute to the UTP site; these read SSKN, SDLD, and SYAYI. Residues Asp-1026 and Asp-1028 each coordinate Mg(2+). The PAP-associated 2 domain maps to 1201-1254; it reads SLGELWLGLLRFYTEEFDFKEYVISIRQKKLLTTFEKQWTSKCIAIEDPFDLNH. A CCHC-type 2 zinc finger spans residues 1310–1327; the sequence is RCCRVCGKIGHYMKDCPK. The interval 1329–1350 is disordered; the sequence is KRLKKKDSEEEKEGNEEEKDSR. The segment at 1358 to 1375 adopts a CCHC-type 3 zinc-finger fold; sequence LRCFICGDAGHVRRECPE. The segment covering 1402-1427 has biased composition (low complexity); sequence AGSAQQQSDQSIRTRQSSECSDSPSY. Residues 1402–1483 form a disordered region; that stretch reads AGSAQQQSDQ…LYNFPQSPPA (82 aa). Pro residues predominate over residues 1428–1450; the sequence is SPQPQPFPQNSPQPSALPPPPSQ. Positions 1451 to 1473 are enriched in low complexity; that stretch reads PGSQPKLGPPQQGGQPPHQVQMP. Arg-1624 is subject to Omega-N-methylarginine.

Belongs to the DNA polymerase type-B-like family. As to quaternary structure, interacts with LIN28A in the presence of pre-let-7 RNA. Interacts with T2BP. Interacts with MOV10; the interaction is RNA-dependent. Requires Mg(2+) as cofactor. Mn(2+) serves as cofactor. As to expression, ubiquitously expressed.

The protein resides in the nucleus. It localises to the cytoplasm. The protein localises to the cytoplasmic ribonucleoprotein granule. The catalysed reaction is RNA(n) + UTP = RNA(n)-3'-uridine ribonucleotide + diphosphate. Uridylyltransferase that mediates the terminal uridylation of mRNAs with short (less than 25 nucleotides) poly(A) tails, hence facilitating global mRNA decay. Essential for both oocyte maturation and fertility. Through 3' terminal uridylation of mRNA, sculpts, with TUT7, the maternal transcriptome by eliminating transcripts during oocyte growth. Involved in microRNA (miRNA)-induced gene silencing through uridylation of deadenylated miRNA targets. Also functions as an integral regulator of microRNA biogenesiS using 3 different uridylation mechanisms. Acts as a suppressor of miRNA biogenesis by mediating the terminal uridylation of some miRNA precursors, including that of let-7 (pre-let-7), miR107, miR-143 and miR-200c. Uridylated miRNAs are not processed by Dicer and undergo degradation. Degradation of pre-let-7 contributes to the maintenance of embryonic stem (ES) cell pluripotency. Also catalyzes the 3' uridylation of miR-26A, a miRNA that targets IL6 transcript. This abrogates the silencing of IL6 transcript, hence promoting cytokine expression. In the absence of LIN28A, TUT7 and TUT4 monouridylate group II pre-miRNAs, which includes most of pre-let7 members, that shapes an optimal 3' end overhang for efficient processing. Add oligo-U tails to truncated pre-miRNAS with a 5' overhang which may promote rapid degradation of non-functional pre-miRNA species. May also suppress Toll-like receptor-induced NF-kappa-B activation via binding to T2BP. Does not play a role in replication-dependent histone mRNA degradation. Due to functional redundancy between TUT4 and TUT7, the identification of the specific role of each of these proteins is difficult. TUT4 and TUT7 restrict retrotransposition of long interspersed element-1 (LINE-1) in cooperation with MOV10 counteracting the RNA chaperonne activity of L1RE1. TUT7 uridylates LINE-1 mRNAs in the cytoplasm which inhibits initiation of reverse transcription once in the nucleus, whereas uridylation by TUT4 destabilizes mRNAs in cytoplasmic ribonucleoprotein granules. This chain is Terminal uridylyltransferase 4, found in Mus musculus (Mouse).